A 548-amino-acid chain; its full sequence is Lysine--tRNA ligase (548 aa).

The 'HIGH' region signature appears at 52–60; that stretch reads PSGLPHIGT. Positions 300-304 match the 'KMSKS' region motif; that stretch reads KISKS. Residue Lys-303 participates in ATP binding.

Belongs to the class-I aminoacyl-tRNA synthetase family.

The protein resides in the cytoplasm. The catalysed reaction is tRNA(Lys) + L-lysine + ATP = L-lysyl-tRNA(Lys) + AMP + diphosphate. The polypeptide is Lysine--tRNA ligase (Mesorhizobium japonicum (strain LMG 29417 / CECT 9101 / MAFF 303099) (Mesorhizobium loti (strain MAFF 303099))).